A 183-amino-acid polypeptide reads, in one-letter code: Ion-translocating oxidoreductase complex subunit B (183 aa).

The segment at M1 to A23 is hydrophobic. One can recognise a 4Fe-4S domain in the interval E29–R88. C46, C49, C54, C71, C113, C116, C119, C123, C143, C146, C149, and C153 together coordinate [4Fe-4S] cluster. 2 4Fe-4S ferredoxin-type domains span residues A104–K133 and M135–V163.

Belongs to the 4Fe4S bacterial-type ferredoxin family. RnfB subfamily. In terms of assembly, the complex is composed of six subunits: RnfA, RnfB, RnfC, RnfD, RnfE and RnfG. [4Fe-4S] cluster serves as cofactor.

Its subcellular location is the cell inner membrane. Functionally, part of a membrane-bound complex that couples electron transfer with translocation of ions across the membrane. The protein is Ion-translocating oxidoreductase complex subunit B of Azoarcus sp. (strain BH72).